The primary structure comprises 129 residues: Large ribosomal subunit protein bL32m (129 aa).

A mitochondrion-targeting transit peptide spans 1–63; that stretch reads MAAMTAAAAA…LEDIWEGILR (63 aa). 4 residues coordinate Zn(2+): Cys-94, Cys-97, Cys-107, and Cys-110.

The protein belongs to the bacterial ribosomal protein bL32 family. In terms of assembly, component of the mitochondrial large ribosomal subunit (mt-LSU). Mature N.crassa 74S mitochondrial ribosomes consist of a small (37S) and a large (54S) subunit. The 37S small subunit contains a 16S ribosomal RNA (16S mt-rRNA) and 32 different proteins. The 54S large subunit contains a 23S rRNA (23S mt-rRNA) and 42 different proteins. bL32m has a zinc binding site. MRPL32 precursor is processed by the m-AAA protease (composed of YTA12/RCA1 and YTA10/AFG3), which cleaves the N-terminal transit peptide. Cleavage by the m-AAA protease takes place prior to assembly into the large subunit, an essential step for mitochondrial ribosome (mitoribosome) assembly. Proper processing by the m-AAA protease is dependent on the zinc-binding region within the tightly folded C-terminal domain of MRPL32: zinc-dependent folding halts degradation initiated from the N-terminus and triggers the release of mature MRPL32.

It localises to the mitochondrion. Its function is as follows. Component of the mitochondrial ribosome (mitoribosome), a dedicated translation machinery responsible for the synthesis of mitochondrial genome-encoded proteins, including at least some of the essential transmembrane subunits of the mitochondrial respiratory chain. The mitoribosomes are attached to the mitochondrial inner membrane and translation products are cotranslationally integrated into the membrane. This chain is Large ribosomal subunit protein bL32m (mrpl32), found in Neurospora crassa (strain ATCC 24698 / 74-OR23-1A / CBS 708.71 / DSM 1257 / FGSC 987).